We begin with the raw amino-acid sequence, 673 residues long: Translation factor GUF1 homolog, mitochondrial (673 aa).

One can recognise a tr-type G domain in the interval 68–260 (ERIRNFSIIA…AVIERIPSPP (193 aa)). GTP is bound by residues 77-84 (AHVDHGKS), 153-157 (DTPGH), and 207-210 (NKID).

It belongs to the TRAFAC class translation factor GTPase superfamily. Classic translation factor GTPase family. LepA subfamily.

It localises to the mitochondrion inner membrane. The catalysed reaction is GTP + H2O = GDP + phosphate + H(+). Its function is as follows. Promotes mitochondrial protein synthesis. May act as a fidelity factor of the translation reaction, by catalyzing a one-codon backward translocation of tRNAs on improperly translocated ribosomes. Binds to mitochondrial ribosomes in a GTP-dependent manner. This Ricinus communis (Castor bean) protein is Translation factor GUF1 homolog, mitochondrial.